Reading from the N-terminus, the 552-residue chain is FERRY endosomal RAB5 effector complex subunit 3 (552 aa).

Position 79 is a phosphoserine (Ser79).

As to quaternary structure, component of the FERRY complex composed of five subunits, TBCK, PPP1R21, FERRY3, CRYZL1 and GATD1 with a ratio of 1:2:1:2:4, respectively.

It is found in the cytoplasm. It localises to the early endosome. In terms of biological role, component of the FERRY complex (Five-subunit Endosomal Rab5 and RNA/ribosome intermediary). The FERRY complex directly interacts with mRNAs and RAB5A, and functions as a RAB5A effector involved in the localization and the distribution of specific mRNAs most likely by mediating their endosomal transport. The complex recruits mRNAs and ribosomes to early endosomes through direct mRNA-interaction. Plays a role in mast cell degranulation. The sequence is that of FERRY endosomal RAB5 effector complex subunit 3 from Rattus norvegicus (Rat).